A 332-amino-acid chain; its full sequence is Transcription regulatory protein SNF6 (332 aa).

A Nuclear localization signal motif is present at residues 2–8; the sequence is GVIKKKR. Position 165 is a phosphothreonine (T165). The disordered stretch occupies residues 278–299; that stretch reads VTTVASQSPHATATEKEPVPAV.

Component of the SWI/SNF global transcription activator complex. The 1.14 MDa SWI/SNF complex is composed of 11 different subunits: one copy each of SWI1, SNF2/SWI2, SNF5, SNF12/SWP73, ARP7/SWP61, ARP9/SWP59; two copies each of SWI3, SNF6, SNF11, SWP82; and three copies of TAF14/SWP29.

Its subcellular location is the nucleus. Its function is as follows. Involved in transcriptional activation. Component of the SWI/SNF complex, an ATP-dependent chromatin remodeling complex, which is required for the positive and negative regulation of gene expression of a large number of genes. It changes chromatin structure by altering DNA-histone contacts within a nucleosome, leading eventually to a change in nucleosome position, thus facilitating or repressing binding of gene-specific transcription factors. This chain is Transcription regulatory protein SNF6 (SNF6), found in Saccharomyces cerevisiae (strain ATCC 204508 / S288c) (Baker's yeast).